The following is a 186-amino-acid chain: dTTP/UTP pyrophosphatase (186 aa).

The active-site Proton acceptor is aspartate 70.

The protein belongs to the Maf family. YhdE subfamily. A divalent metal cation serves as cofactor.

Its subcellular location is the cytoplasm. The catalysed reaction is dTTP + H2O = dTMP + diphosphate + H(+). It carries out the reaction UTP + H2O = UMP + diphosphate + H(+). In terms of biological role, nucleoside triphosphate pyrophosphatase that hydrolyzes dTTP and UTP. May have a dual role in cell division arrest and in preventing the incorporation of modified nucleotides into cellular nucleic acids. This Vibrio vulnificus (strain CMCP6) protein is dTTP/UTP pyrophosphatase.